A 275-amino-acid chain; its full sequence is NH(3)-dependent NAD(+) synthetase (275 aa).

47-54 (GISGGQDS) serves as a coordination point for ATP. Residue Asp53 coordinates Mg(2+). Deamido-NAD(+) is bound at residue Arg141. Thr161 contributes to the ATP binding site. Residue Glu166 participates in Mg(2+) binding. Lys174 and Asp181 together coordinate deamido-NAD(+). ATP-binding residues include Lys190 and Thr212. 261 to 262 (HK) contributes to the deamido-NAD(+) binding site.

It belongs to the NAD synthetase family. Homodimer.

The catalysed reaction is deamido-NAD(+) + NH4(+) + ATP = AMP + diphosphate + NAD(+) + H(+). The protein operates within cofactor biosynthesis; NAD(+) biosynthesis; NAD(+) from deamido-NAD(+) (ammonia route): step 1/1. Its function is as follows. Catalyzes the ATP-dependent amidation of deamido-NAD to form NAD. Uses ammonia as a nitrogen source. The protein is NH(3)-dependent NAD(+) synthetase of Lacticaseibacillus casei (strain BL23) (Lactobacillus casei).